Reading from the N-terminus, the 118-residue chain is Holo-[acyl-carrier-protein] synthase (118 aa).

Mg(2+)-binding residues include Asp-8 and Glu-58.

The protein belongs to the P-Pant transferase superfamily. AcpS family. The cofactor is Mg(2+).

The protein localises to the cytoplasm. It carries out the reaction apo-[ACP] + CoA = holo-[ACP] + adenosine 3',5'-bisphosphate + H(+). Its function is as follows. Transfers the 4'-phosphopantetheine moiety from coenzyme A to a Ser of acyl-carrier-protein. This Listeria monocytogenes serotype 4a (strain HCC23) protein is Holo-[acyl-carrier-protein] synthase.